The chain runs to 288 residues: Mycothiol S-conjugate amidase (288 aa).

Zn(2+)-binding residues include histidine 12, aspartate 15, and histidine 142.

The protein belongs to the MshB deacetylase family. Mca subfamily. Monomer. Zn(2+) is required as a cofactor.

The catalysed reaction is mycothiol S-conjugate + H2O = an N-acetyl-L-cysteine-S-conjugate + 1D-myo-inositol 2-amino-2-deoxy-alpha-D-glucopyranoside. Its activity is regulated as follows. Partially inhibited by MSH when MSmB (a bimane derivative of MSH) is used as substrate. Its function is as follows. A mycothiol (MSH, N-acetyl-cysteinyl-glucosaminyl-inositol) S-conjugate amidase, it recycles conjugated MSH to the N-acetyl cysteine conjugate and the MSH precursor. Involved in MSH-dependent detoxification of a number of alkylating agents and antibiotics. Activity is specific for the mycothiol moiety. This chain is Mycothiol S-conjugate amidase, found in Mycolicibacterium smegmatis (strain ATCC 700084 / mc(2)155) (Mycobacterium smegmatis).